An 825-amino-acid chain; its full sequence is KH domain-containing protein YLL032C (825 aa).

One can recognise a KH domain in the interval 482–556 (PAEESFFIPE…ANICLAKNDL (75 aa)). Low complexity predominate over residues 727-740 (SSKSNTSNSNTNGN). The disordered stretch occupies residues 727-766 (SSKSNTSNSNTNGNFRSMNNAKSRTTIDNTSQSGASPQRH). The segment covering 741–762 (FRSMNNAKSRTTIDNTSQSGAS) has biased composition (polar residues). Residue S762 is modified to Phosphoserine.

The protein localises to the cytoplasm. In Saccharomyces cerevisiae (strain ATCC 204508 / S288c) (Baker's yeast), this protein is KH domain-containing protein YLL032C.